Consider the following 198-residue polypeptide: Secreted RxLR effector protein PITG_22926 (198 aa).

The signal sequence occupies residues 1–20 (MLRSFLLIVATVSLFGQCKP). The short motif at 43-52 (RFLRTNDEER) is the RxLR-dEER element.

The protein belongs to the RxLR effector family. In terms of assembly, interacts with host MAP3Kbeta2 in the nucleoplasm.

It is found in the secreted. The protein localises to the host nucleus. Its subcellular location is the host nucleolus. Functionally, secreted effector that promotes P.infestans colonization of plant host. Specifically suppresses Avr4/Cf4- and AvrPto/Pto-triggered cell death. Targets the potato MAP3Kbeta2 kinase, a positive regulator of cell death associated with plant immunity, and perturbs signaling pathways triggered by MAP3Kbeta2. The sequence is that of Secreted RxLR effector protein PITG_22926 from Phytophthora infestans (strain T30-4) (Potato late blight agent).